The sequence spans 117 residues: G antigen 12B/C/D/E (117 aa).

The disordered stretch occupies residues 1–117 (MSWRGRSTYY…PEEGEKQSQC (117 aa)). Acidic residues-rich tracts occupy residues 32–45 (FSDE…EEGE) and 87–96 (ECEDGPDGQE). Residues 103-117 (EEVKTPEEGEKQSQC) show a composition bias toward basic and acidic residues.

Belongs to the GAGE family.

The polypeptide is G antigen 12B/C/D/E (GAGE12B) (Homo sapiens (Human)).